Consider the following 305-residue polypeptide: Cell division control protein 2 homolog C (305 aa).

A Protein kinase domain is found at 4-297 (YEKLEKVGEG…AKAALDHPYF (294 aa)). ATP-binding positions include 10–18 (VGEGTYGKV) and K33. Position 14 is a phosphothreonine (T14). Y15 bears the Phosphotyrosine mark. Catalysis depends on D138, which acts as the Proton acceptor. T172 bears the Phosphothreonine; by CAK mark.

It belongs to the protein kinase superfamily. CMGC Ser/Thr protein kinase family. CDC2/CDKX subfamily.

It catalyses the reaction L-seryl-[protein] + ATP = O-phospho-L-seryl-[protein] + ADP + H(+). The catalysed reaction is L-threonyl-[protein] + ATP = O-phospho-L-threonyl-[protein] + ADP + H(+). The enzyme catalyses [DNA-directed RNA polymerase] + ATP = phospho-[DNA-directed RNA polymerase] + ADP + H(+). Functionally, plays a key role in the control of the eukaryotic cell cycle. The protein is Cell division control protein 2 homolog C (CDC2C) of Antirrhinum majus (Garden snapdragon).